The chain runs to 303 residues: Putative AraC-like transcription regulator (303 aa).

The region spanning 202–300 (ASALTFLHRD…GMNPGDYRKH (99 aa)) is the HTH araC/xylS-type domain. DNA-binding regions (H-T-H motif) lie at residues 219-240 (AELASAAAVSRSTLAARFKATV) and 267-290 (LAAIAHSVGYGSESALSVAFKRVL).

The polypeptide is Putative AraC-like transcription regulator (Streptomyces antibioticus).